Consider the following 158-residue polypeptide: Ankyrin repeat domain-containing protein 37 (158 aa).

ANK repeat units lie at residues 1 to 25 (MLLL…SVNA), 30 to 59 (CEQS…DLNQ), and 63 to 92 (FGEA…QIDL). Positions 129–149 (EQPNKDHCVQVLRLKRSFGSE) match the Nuclear localization signal motif.

In terms of processing, ubiquitinated by the CRL2(FEM1B) complex, leading to its degradation.

It localises to the nucleus. It is found in the cytoplasm. This Bos taurus (Bovine) protein is Ankyrin repeat domain-containing protein 37 (ANKRD37).